A 503-amino-acid chain; its full sequence is GMP synthase [glutamine-hydrolyzing] (503 aa).

The 187-residue stretch at 3 to 189 folds into the Glutamine amidotransferase type-1 domain; that stretch reads PVLVVDFGSQ…AFLSSFAAPN (187 aa). Cysteine 80 (nucleophile) is an active-site residue. Active-site residues include histidine 165 and glutamate 167. Residues 190–380 form the GMPS ATP-PPase domain; the sequence is WDPEQTICGT…LGIPKHIVHR (191 aa). 217–223 is an ATP binding site; sequence SGGVDSV.

Homodimer.

It carries out the reaction XMP + L-glutamine + ATP + H2O = GMP + L-glutamate + AMP + diphosphate + 2 H(+). It functions in the pathway purine metabolism; GMP biosynthesis; GMP from XMP (L-Gln route): step 1/1. Its function is as follows. Catalyzes the synthesis of GMP from XMP. The protein is GMP synthase [glutamine-hydrolyzing] of Tropheryma whipplei (strain TW08/27) (Whipple's bacillus).